The primary structure comprises 245 residues: 6-carboxyhexanoate--CoA ligase (245 aa).

The protein belongs to the BioW family. Homodimer. Mg(2+) serves as cofactor.

It catalyses the reaction heptanedioate + ATP + CoA = 6-carboxyhexanoyl-CoA + AMP + diphosphate. It participates in metabolic intermediate metabolism; pimeloyl-CoA biosynthesis; pimeloyl-CoA from pimelate: step 1/1. Catalyzes the transformation of pimelate into pimeloyl-CoA with concomitant hydrolysis of ATP to AMP. The protein is 6-carboxyhexanoate--CoA ligase of Thermodesulfovibrio yellowstonii (strain ATCC 51303 / DSM 11347 / YP87).